The primary structure comprises 247 residues: MIFDPPLQSGQLISRYKRFLTDVRLDNGEVITIHCANTGAMTGCADPGTRVWYSTSDNPKRKLPHSWEIAESPAGHFICVNTARANQIARELIEQGALAPLTGYARLRTEVKYGEENSRIDLLLEDDGKPDCYIEVKSVTLLDEREQPGMGYFPDAVTARGAKHLRELMVMKAAGHRAVLLFMVLHSGIVRMRPAAHIDPHYSLLIEQAITAGVEILCYRPHVGVQSMVAQDFIPFESCHLLPEGSE.

It belongs to the SfsA family.

The chain is Sugar fermentation stimulation protein homolog from Aeromonas salmonicida (strain A449).